Consider the following 428-residue polypeptide: MLAVHTSPLAQPGIGDAGGMNVYVLQSALHLARRGIEVEIFTRATASADPPIVWVAPGVLVRNVVAGPFEGLDKYDLPTQLCAFAAGVLRAEAAHEPGYYDIVHSHYWLSGQVGWLARDRWAVPLVHTAHTLAAVKNAALADGDAAEPPLRSVGEQQVVDEADRMIVNTDDEARQLISIHRADPAKIDVAHPGVDLDMFRPGDRRAARAALGLPLDGNVVAFVGRIQPLKAPDIVLRAAAKLPQVRIVVAGGPSGSGLASPDGLVRLADELGITARVTFLPPQSRTNLATVFQAADLVAVPSYSESFGLVAVEAQACGTPVVAAAVGGLPVAVRDGVTGTLVFGHNVGHWADAVDQLLRLSAGPQARAISRAAVVHAAQFSWDNTTDALLASYRRAIGDFTATRQHRVRDLVATRKPRRWISRRGMGA.

H5 lines the 1D-myo-inositol 3-phosphate pocket. Residues 11 to 12 (QP) and G19 each bind UDP-N-acetyl-alpha-D-glucosamine. 1D-myo-inositol 3-phosphate-binding positions include 16–21 (DAGGMN), K74, Y107, T131, and R151. UDP-N-acetyl-alpha-D-glucosamine is bound by residues R225, K230, and Q283. Residues F292, Q293, and A295 each coordinate Mg(2+). The UDP-N-acetyl-alpha-D-glucosamine site is built by E305 and E313. T319 is a binding site for Mg(2+).

The protein belongs to the glycosyltransferase group 1 family. MshA subfamily. In terms of assembly, homodimer.

The enzyme catalyses 1D-myo-inositol 3-phosphate + UDP-N-acetyl-alpha-D-glucosamine = 1D-myo-inositol 2-acetamido-2-deoxy-alpha-D-glucopyranoside 3-phosphate + UDP + H(+). In terms of biological role, catalyzes the transfer of a N-acetyl-glucosamine moiety to 1D-myo-inositol 3-phosphate to produce 1D-myo-inositol 2-acetamido-2-deoxy-glucopyranoside 3-phosphate in the mycothiol biosynthesis pathway. This chain is D-inositol 3-phosphate glycosyltransferase, found in Mycobacterium leprae (strain Br4923).